We begin with the raw amino-acid sequence, 559 residues long: 3-phosphoinositide-dependent protein kinase 1 (559 aa).

Phosphotyrosine; by SRC and INSR is present on Tyr-9. Ser-25 is modified (phosphoserine). The tract at residues 25–83 is disordered; sequence SPSMVRSQTEPGSSPGIPSGVSRQGSTMDGTTAEARPSTNPLQQHPAQLPPQPRKKRPE. Residues 35-44 show a composition bias toward low complexity; it reads PGSSPGIPSG. A compositionally biased stretch (polar residues) spans 45–54; it reads VSRQGSTMDG. The 261-residue stretch at 85–345 folds into the Protein kinase domain; it reads FKFGKILGEG…YGPLKAHPFF (261 aa). ATP is bound by residues 95-97 and Lys-114; that span reads SFS. Positions 116–160 are PIF-pocket; it reads LEKRHIIKENKVPYVTRERDVMSRLDHPFFVKLYFTFQDDEKLYF. ATP is bound by residues 163–165 and Glu-169; that span reads SYA. Asp-208 (proton acceptor) is an active-site residue. Residues Glu-212 and Asp-226 each contribute to the ATP site. Position 244 is a phosphoserine (Ser-244). Lys-307 carries the N6-acetyllysine modification. Phosphothreonine; by MELK is present on Thr-357. Tyr-376 and Tyr-379 each carry phosphotyrosine; by SRC and INSR. At Ser-396 the chain carries Phosphoserine. Ser-397 carries the phosphoserine; by MAP3K5 modification. Residue Ser-399 is modified to Phosphoserine. Phosphoserine; by MAP3K5 is present on Ser-401. Ser-413 is modified (phosphoserine). One can recognise a PH domain in the interval 462–553; the sequence is KMGPVDKRKG…EVWRQQYQSN (92 aa). Residue Ser-504 is modified to Phosphoserine; by PKC/PRKCQ. The residue at position 516 (Thr-516) is a Phosphothreonine; by autocatalysis. At Ser-532 the chain carries Phosphoserine; by PKC/PRKCQ.

It belongs to the protein kinase superfamily. AGC Ser/Thr protein kinase family. PDPK1 subfamily. As to quaternary structure, homodimer in its autoinhibited state. Active as monomer. Interacts with NPRL2, PAK1, PTK2B, GRB14, STRAP and IKKB. The Tyr-9 phosphorylated form interacts with SRC, RASA1 and CRK (via their SH2 domains). Interacts with SGK3 in a phosphorylation-dependent manner. The tyrosine-phosphorylated form interacts with PTPN6. The Ser-244 phosphorylated form interacts with YWHAH and YWHAQ. Binds INSR in response to insulin. Interacts (via PH domain) with SMAD3, SMAD4 and SMAD7. Interacts with PKN2; the interaction stimulates PDPK1 autophosphorylation, its PI(3,4,5)P3-dependent kinase activity toward 'Ser-473' of AKT1 but also activates its kinase activity toward PRKCD and PRKCZ. Interacts with PKN1 (via C-terminus) and PPARG. Phosphorylation on Ser-244 in the activation loop is required for full activity. PDPK1 itself can autophosphorylate Ser-244, leading to its own activation. Autophosphorylation is inhibited by the apoptotic C-terminus cleavage product of PKN2. Tyr-9 phosphorylation is critical for stabilization of both PDPK1 and the PDPK1/SRC complex via HSP90-mediated protection of PDPK1 degradation. Angiotensin II stimulates the tyrosine phosphorylation of PDPK1 in vascular smooth muscle in a calcium- and SRC-dependent manner. Phosphorylated on Tyr-9, Tyr-376 and Tyr-379 by INSR in response to insulin. Palmitate negatively regulates autophosphorylation at Ser-244 and palmitate-induced phosphorylation at Ser-532 and Ser-504 by PKC/PRKCQ negatively regulates its ability to phosphorylate PKB/AKT1. Phosphorylation at Thr-357 by MELK partially inhibits kinase activity, the inhibition is cooperatively enhanced by phosphorylation at Ser-397 and Ser-401 by MAP3K5. In terms of processing, monoubiquitinated in the kinase domain, deubiquitinated by USP4. As to expression, highly expressed in heart, brain, liver and testis, also expressed in embryonic cells.

Its subcellular location is the cytoplasm. The protein resides in the nucleus. The protein localises to the cell membrane. It is found in the cell junction. It localises to the focal adhesion. The enzyme catalyses L-seryl-[protein] + ATP = O-phospho-L-seryl-[protein] + ADP + H(+). The catalysed reaction is L-threonyl-[protein] + ATP = O-phospho-L-threonyl-[protein] + ADP + H(+). With respect to regulation, homodimerization regulates its activity by maintaining the kinase in an autoinhibitory conformation. NPRL2 down-regulates its activity by interfering with tyrosine phosphorylation at the Tyr-9, Tyr-376 and Tyr-379 residues. The 14-3-3 protein YWHAQ acts as a negative regulator by association with the residues surrounding the Ser-244 residue. STRAP positively regulates its activity by enhancing its autophosphorylation and by stimulating its dissociation from YWHAQ. SMAD2, SMAD3, SMAD4 and SMAD7 also positively regulate its activity by stimulating its dissociation from YWHAQ. Activated by phosphorylation on Tyr-9, Tyr-376 and Tyr-379 by INSR in response to insulin. Functionally, serine/threonine kinase which acts as a master kinase, phosphorylating and activating a subgroup of the AGC family of protein kinases. Its targets include: protein kinase B (PKB/AKT1, PKB/AKT2, PKB/AKT3), p70 ribosomal protein S6 kinase (RPS6KB1), p90 ribosomal protein S6 kinase (RPS6KA1, RPS6KA2 and RPS6KA3), cyclic AMP-dependent protein kinase (PRKACA), protein kinase C (PRKCD and PRKCZ), serum and glucocorticoid-inducible kinase (SGK1, SGK2 and SGK3), p21-activated kinase-1 (PAK1), TSSK3, protein kinase PKN (PKN1 and PKN2). Plays a central role in the transduction of signals from insulin by providing the activating phosphorylation to PKB/AKT1, thus propagating the signal to downstream targets controlling cell proliferation and survival, as well as glucose and amino acid uptake and storage. Negatively regulates the TGF-beta-induced signaling by: modulating the association of SMAD3 and SMAD7 with TGF-beta receptor, phosphorylating SMAD2, SMAD3, SMAD4 and SMAD7, preventing the nuclear translocation of SMAD3 and SMAD4 and the translocation of SMAD7 from the nucleus to the cytoplasm in response to TGF-beta. Activates PPARG transcriptional activity and promotes adipocyte differentiation. Activates the NF-kappa-B pathway via phosphorylation of IKKB. The tyrosine phosphorylated form is crucial for the regulation of focal adhesions by angiotensin II. Controls proliferation, survival, and growth of developing pancreatic cells. Participates in the regulation of Ca(2+) entry and Ca(2+)-activated K(+) channels of mast cells. Essential for the motility of vascular endothelial cells (ECs) and is involved in the regulation of their chemotaxis. Plays a critical role in cardiac homeostasis by serving as a dual effector for cell survival and beta-adrenergic response. Plays an important role during thymocyte development by regulating the expression of key nutrient receptors on the surface of pre-T cells and mediating Notch-induced cell growth and proliferative responses. Provides negative feedback inhibition to toll-like receptor-mediated NF-kappa-B activation in macrophages. The protein is 3-phosphoinositide-dependent protein kinase 1 (Pdpk1) of Mus musculus (Mouse).